The chain runs to 776 residues: Ecdysone receptor (776 aa).

The modulating stretch occupies residues 1–290 (MYRLNIVSTN…GPTPRQQEEL (290 aa)). The segment at 199–283 (NEEWISSPSP…DAKKQKKGPT (85 aa)) is disordered. Positions 204–213 (SSPSPGSVPG) are enriched in low complexity. Composition is skewed to polar residues over residues 227–245 (TTYTTTMSNGYSSPMSTGS) and 261–270 (SPSSSLNGYT). The nuclear receptor DNA-binding region spans 288-363 (EELCLVCGDR…VGMRPECVVP (76 aa)). 2 consecutive NR C4-type zinc fingers follow at residues 291 to 311 (CLVCGDRESGYHYNALTCEGC) and 327 to 346 (CKFGHACEMDMYMRRKCQEC). Positions 437 to 673 (NQMAVIYKLI…FLEEIWDVQD (237 aa)) constitute an NR LBD domain. Residues 679 to 688 (QAQMHSHGTQ) show a composition bias toward polar residues. Residues 679–776 (QAQMHSHGTQ…VPGLGMLDQV (98 aa)) are disordered. Over residues 689–745 (SSSSSSSSSSSSSNGSSNGNSSSNSNSSQHGPHPHPHGQQLTPNQQQHQQQHSQLQQ) the composition is skewed to low complexity.

Belongs to the nuclear hormone receptor family. NR1 subfamily. As to quaternary structure, heterodimer of USP and ECR. Only the heterodimer is capable of high-affinity binding to ecdysone. In terms of tissue distribution, a peak level expression is seen in the fat body of previtellogenic female mosquitos at one and two days after eclosion, levels fall three-fold at three days posteclosion.

It is found in the nucleus. Functionally, receptor for ecdysone. Binds to ecdysone response elements (ECRES). This chain is Ecdysone receptor (EcR), found in Aedes aegypti (Yellowfever mosquito).